Here is a 470-residue protein sequence, read N- to C-terminus: Pheromone a factor receptor (470 aa).

The Extracellular segment spans residues 1–5; sequence MSYKS. Residues 6 to 23 form a helical membrane-spanning segment; the sequence is AIIGLCLLAVILLAPPLA. Over 24 to 29 the chain is Cytoplasmic; sequence WHSHTK. A helical membrane pass occupies residues 30-53; sequence NIPAIILITWLLTMNLTCIVDAAI. At 54 to 70 the chain is on the extracellular side; it reads WSDDDFLTRWDGKGWCD. Residues 71–98 traverse the membrane as a helical segment; it reads IVIKLQVGANIGISCAVTNIIYNLHTIL. The Cytoplasmic portion of the chain corresponds to 99–116; the sequence is KADSVLPDLSSWTKIVKD. The chain crosses the membrane as a helical span at residues 117 to 134; sequence LVISLFTPVMVMGFSYLL. Over 135-155 the chain is Extracellular; sequence QVFRYGIARYNGCQNLLSPTW. A helical membrane pass occupies residues 156 to 183; that stretch reads ITTVLYTMWMLIWSFVGAVYATLVLFVF. The Cytoplasmic segment spans residues 184-205; the sequence is YKKRKDVRDILHCTNSGLNLTR. Residues 206–228 traverse the membrane as a helical segment; that stretch reads FARLLIFCFIIILVMFPFSVYTF. The Extracellular portion of the chain corresponds to 229 to 266; it reads VQDLQQVEGHYTFKNTHSSTIWNTIIKFDPGRPIYNIW. The chain crosses the membrane as a helical span at residues 267–285; sequence LYVLMSYLVFLIFGLGSDA. The Cytoplasmic portion of the chain corresponds to 286–470; sequence LHMYSKFLRS…EHSSENTAGP (185 aa). Residues 300-470 are hydrophilic; sequence FVLDMWKRFI…EHSSENTAGP (171 aa). A disordered region spans residues 440–470; that stretch reads NFEGESLCYSPASKEENSSSNEHSSENTAGP.

It belongs to the G-protein coupled receptor 4 family.

The protein localises to the membrane. Receptor for the peptide pheromone a factor. The sequence is that of Pheromone a factor receptor (STE3) from Saccharomyces cerevisiae (strain ATCC 204508 / S288c) (Baker's yeast).